Reading from the N-terminus, the 124-residue chain is MRLITHNMLSCNIKGVTSGFPLRIEAGNVIEKEVDFNPDFIRHMFAKIEWKALVEGARSMGYAELPEESPDAAVLKSDEPFLKKLHHALLELHLEEGALVCPETGRKFPVNKGIPNMLLHEDEV.

One can recognise a TRM112 domain in the interval 2-120 (RLITHNMLSC…NKGIPNMLLH (119 aa)).

The protein belongs to the TRM112 family. As to quaternary structure, interacts with TRM9.

In terms of biological role, acts as an activator of both rRNA/tRNA and protein methyltransferases. Required for TRM9 tRNA methyltransferase activity. Involved in the regulation of cell division progression during organ growth. Required for the expression of cell cycle-related genes, and the G2-M phase progression during organogenesis. The chain is Multifunctional methyltransferase subunit TRM112 homolog A from Arabidopsis thaliana (Mouse-ear cress).